The primary structure comprises 642 residues: Core protein VP4 (642 aa).

Belongs to the orbivirus VP4 family.

The protein resides in the virion. Functionally, the VP4 protein is one of the five proteins (with VP1, VP3, VP6 and VP7) which form the inner capsid of the virus. This chain is Core protein VP4 (Segment-4), found in African horse sickness virus (AHSV).